The primary structure comprises 399 residues: Keratin, type I cytoskeletal 19 (399 aa).

The segment at 1–78 (MTSYSYRQSS…ATSDGLLAGN (78 aa)) is head. Residue R7 is modified to Omega-N-methylarginine. Residues S14 and S22 each carry the phosphoserine modification. An Asymmetric dimethylarginine; alternate modification is found at R24. At R24 the chain carries Omega-N-methylarginine; alternate. R32 is subject to Omega-N-methylarginine. Phosphoserine occurs at positions 35 and 40. 2 positions are modified to omega-N-methylarginine: R43 and R51. Residues S57 and S71 each carry the phosphoserine modification. The coil 1A stretch occupies residues 79-114 (EKLTMQNLNDRLASYLEKVRALEEANGDLEVKIRDW). An IF rod domain is found at 79-390 (EKLTMQNLND…NLLEGQDAYF (312 aa)). Positions 115-132 (YQKQGPGPARDYSHYFKT) are linker 1. The segment at 133–224 (IEDLRDQILG…KNHEEEMSVL (92 aa)) is coil 1B. The tract at residues 225–247 (KGQVGGQVSVEVDSAPGIDLAKI) is linker 12. The interval 243–389 (DLAKILSDMR…RNLLEGQDAY (147 aa)) is necessary for interaction with PNN. Residues 248 to 386 (LSDMRSQYEV…ATYRNLLEGQ (139 aa)) form a coil 2 region. The residue at position 322 (T322) is a Phosphothreonine. The segment at 387–399 (DAYFNDLSLAKAL) is rod-like helical tail. Residue S394 is modified to Phosphoserine.

The protein belongs to the intermediate filament family. In terms of assembly, heterotetramer of two type I and two type II keratins. Interacts with PNN and the actin-binding domain of DMD.

In terms of biological role, involved in the organization of myofibers. Together with KRT8, helps to link the contractile apparatus to dystrophin at the costameres of striated muscle. The polypeptide is Keratin, type I cytoskeletal 19 (KRT19) (Bos taurus (Bovine)).